We begin with the raw amino-acid sequence, 173 residues long: Co-chaperone protein HscB homolog (173 aa).

Positions 5-77 (CHFALFELKP…PKRARYLLAM (73 aa)) constitute a J domain.

It belongs to the HscB family. Interacts with HscA and stimulates its ATPase activity.

Co-chaperone involved in the maturation of iron-sulfur cluster-containing proteins. Seems to help targeting proteins to be folded toward HscA. This is Co-chaperone protein HscB homolog from Pseudomonas syringae pv. tomato (strain ATCC BAA-871 / DC3000).